We begin with the raw amino-acid sequence, 139 residues long: Angiogenin (139 aa).

Residues 1–21 form the signal peptide; sequence MAMSSLWWTAILLLALTVSMC. The active-site Proton acceptor is the His-34. Disulfide bonds link Cys-49–Cys-102, Cys-64–Cys-111, and Cys-82–Cys-126. TRNA-binding residues include Cys-102 and Val-122. The active-site Proton donor is His-133.

The protein belongs to the pancreatic ribonuclease family. As to quaternary structure, homodimer. Interacts with RNH1; inhibiting ANG ribonuclease activity.

It is found in the secreted. It localises to the nucleus. The protein localises to the nucleolus. Its subcellular location is the cytoplasm. The protein resides in the stress granule. Secreted ribonuclease that can either promote or restrict cell proliferation of target cells, depending on the context. Endocytosed in target cells via its receptor PLXNB2 and translocates to the cytoplasm or nucleus. Under stress conditions, localizes to the cytoplasm and promotes the assembly of stress granules (SGs): specifically cleaves a subset of tRNAs within anticodon loops to produce tRNA-derived stress-induced fragments (tiRNAs), resulting in translation repression and inhibition of cell proliferation. tiRNas also prevent formation of apoptosome, thereby promoting cell survival. Preferentially cleaves RNAs between a pyrimidine and an adenosine residue, suggesting that it cleaves the anticodon loop of tRNA(Ala) (32-UUAGCAU-38) after positions 33 and 36. Cleaves a subset of tRNAs, including tRNA(Ala), tRNA(Glu), tRNA(Gly), tRNA(Lys), tRNA(Val), tRNA(His), tRNA(Asp) and tRNA(Sec). Under growth conditions and in differentiated cells, translocates to the nucleus and stimulates ribosomal RNA (rRNA) transcription, including that containing the initiation site sequences of 45S rRNA, thereby promoting cell growth and proliferation. Angiogenin induces vascularization of normal and malignant tissues via its ability to promote rRNA transcription. This is Angiogenin (ANG) from Gallus gallus (Chicken).